Here is a 148-residue protein sequence, read N- to C-terminus: Large ribosomal subunit protein bL9 (148 aa).

This sequence belongs to the bacterial ribosomal protein bL9 family.

Binds to the 23S rRNA. This Finegoldia magna (strain ATCC 29328 / DSM 20472 / WAL 2508) (Peptostreptococcus magnus) protein is Large ribosomal subunit protein bL9.